Consider the following 365-residue polypeptide: Aminomethyltransferase (365 aa).

This sequence belongs to the GcvT family. In terms of assembly, the glycine cleavage system is composed of four proteins: P, T, L and H.

It catalyses the reaction N(6)-[(R)-S(8)-aminomethyldihydrolipoyl]-L-lysyl-[protein] + (6S)-5,6,7,8-tetrahydrofolate = N(6)-[(R)-dihydrolipoyl]-L-lysyl-[protein] + (6R)-5,10-methylene-5,6,7,8-tetrahydrofolate + NH4(+). Its function is as follows. The glycine cleavage system catalyzes the degradation of glycine. The sequence is that of Aminomethyltransferase from Bacillus pumilus (strain SAFR-032).